Consider the following 627-residue polypeptide: Ski protein homolog (627 aa).

Over residues 1–12 (MSDSPIGSSQQV) the composition is skewed to polar residues. 3 disordered regions span residues 1 to 22 (MSDS…PDLM), 34 to 58 (LHEE…KDSR), and 299 to 318 (EYDE…METP).

This sequence belongs to the SKI family. As to quaternary structure, may interact with daf-3. Expressed in ganglia in the head and tail and in the anterior pharynx.

Its subcellular location is the nucleus. In terms of biological role, probable component of transcriptional regulatory complex with SMAD protein daf-3. Required to regulate entry into a developmentally arrested larval state known as dauer, in response to harsh environmental conditions. Involved in larvae undergoing cell-cycle arrest during the dauer stage. This is Ski protein homolog from Caenorhabditis elegans.